A 133-amino-acid polypeptide reads, in one-letter code: UPF0102 protein Fnod_1509 (133 aa).

It belongs to the UPF0102 family.

In Fervidobacterium nodosum (strain ATCC 35602 / DSM 5306 / Rt17-B1), this protein is UPF0102 protein Fnod_1509.